Reading from the N-terminus, the 516-residue chain is Adenosine deaminase (516 aa).

Positions 1–20 (MFPRLIVWLLAASAVHAVLD) are cleaved as a signal peptide.

It belongs to the metallo-dependent hydrolases superfamily. Adenosine and AMP deaminases family. ADGF subfamily. It depends on Zn(2+) as a cofactor. In terms of tissue distribution, salivary gland (at protein level).

It localises to the secreted. The catalysed reaction is adenosine + H2O + H(+) = inosine + NH4(+). Functionally, catalyzes the deamination of adenosine to inosine. In Phlebotomus duboscqi (Sandfly), this protein is Adenosine deaminase.